A 423-amino-acid chain; its full sequence is Glucose-1-phosphate adenylyltransferase (423 aa).

Residues Tyr-107, Gly-172, 187–188 (EK), and Ser-205 contribute to the alpha-D-glucose 1-phosphate site.

The protein belongs to the bacterial/plant glucose-1-phosphate adenylyltransferase family. As to quaternary structure, homotetramer.

The enzyme catalyses alpha-D-glucose 1-phosphate + ATP + H(+) = ADP-alpha-D-glucose + diphosphate. It functions in the pathway glycan biosynthesis; glycogen biosynthesis. In terms of biological role, involved in the biosynthesis of ADP-glucose, a building block required for the elongation reactions to produce glycogen. Catalyzes the reaction between ATP and alpha-D-glucose 1-phosphate (G1P) to produce pyrophosphate and ADP-Glc. This Albidiferax ferrireducens (strain ATCC BAA-621 / DSM 15236 / T118) (Rhodoferax ferrireducens) protein is Glucose-1-phosphate adenylyltransferase.